The chain runs to 276 residues: Cytoskeleton protein RodZ (276 aa).

Over 1–110 (MTSMRKKTIG…SSKKKKKKTS (110 aa)) the chain is Cytoplasmic. Residues 111-131 (FLPLFYFILFALSILIFVTYY) form a helical; Signal-anchor for type II membrane protein membrane-spanning segment. Topologically, residues 132–276 (VWNYIQTQPE…GQITVTFTKN (145 aa)) are extracellular.

This sequence belongs to the RodZ family. As to quaternary structure, interacts with MltG and MreC in the elongasome. Interacts with KhpB (also called EloR/Jag).

It is found in the cell membrane. In terms of biological role, cytoskeletal protein that is involved in cell-shape control through regulation of the length of the long axis. Probably part of the elongasome which synthesizes peripheral peptidoglycan. The sequence is that of Cytoskeleton protein RodZ from Streptococcus pneumoniae (strain ATCC BAA-255 / R6).